The sequence spans 341 residues: MKAKDFDYYLPEELIAQHPLEKRDECRLMVLDKETGHVEHKVFKDILDYLNKGDCLVLNDTRVMPARLIGEKEETKGKMEFLLLKRTDKDTWETLVKPGKRAKIGSRFIFGQGELKAEVIGMAEEGSRIVKFEYDGIFEEVLDRLGQMPLPPYITEKLEDKEKYQTVYSKESGSAAAPTAGLHFTEELLNKIKEKGIKIVFLTLHVGLGTFRPVKEGEIENHIMHSEYYCISKETADIINTTKEAGGRVIAVGTTSCRTLETLGSKHGKIIEDSGWTNIFMYPGYEFKVTDALITNFHLPQSTLIMLVSALSERERVLNAYEIAVREKYRFFSFGDAMFVK.

Belongs to the QueA family. Monomer.

The protein localises to the cytoplasm. It carries out the reaction 7-aminomethyl-7-carbaguanosine(34) in tRNA + S-adenosyl-L-methionine = epoxyqueuosine(34) in tRNA + adenine + L-methionine + 2 H(+). It functions in the pathway tRNA modification; tRNA-queuosine biosynthesis. Transfers and isomerizes the ribose moiety from AdoMet to the 7-aminomethyl group of 7-deazaguanine (preQ1-tRNA) to give epoxyqueuosine (oQ-tRNA). The protein is S-adenosylmethionine:tRNA ribosyltransferase-isomerase of Clostridium tetani (strain Massachusetts / E88).